We begin with the raw amino-acid sequence, 560 residues long: Proteasome-associated ATPase (560 aa).

Basic and acidic residues predominate over residues 1-19 (MSQQHDDRRPPDTADRDLA). The disordered stretch occupies residues 1–21 (MSQQHDDRRPPDTADRDLARQ). The stretch at 16–55 (RDLARQATSLAEKNERLTAALTAARAQLVEMKAQLEEVSK) forms a coiled coil. 237-242 (GCGKTL) provides a ligand contact to ATP. Residues 559–560 (YL) form a docks into pockets in the proteasome alpha-ring region.

The protein belongs to the AAA ATPase family. As to quaternary structure, homohexamer. Assembles into a hexameric ring structure that caps the 20S proteasome core. Strongly interacts with the prokaryotic ubiquitin-like protein Pup through a hydrophobic interface; the interacting region of ARC lies in its N-terminal coiled-coil domain. There is one Pup binding site per ARC hexamer ring. Upon ATP-binding, the C-terminus of ARC interacts with the alpha-rings of the proteasome core, possibly by binding to the intersubunit pockets.

It participates in protein degradation; proteasomal Pup-dependent pathway. Its function is as follows. ATPase which is responsible for recognizing, binding, unfolding and translocation of pupylated proteins into the bacterial 20S proteasome core particle. May be essential for opening the gate of the 20S proteasome via an interaction with its C-terminus, thereby allowing substrate entry and access to the site of proteolysis. Thus, the C-termini of the proteasomal ATPase may function like a 'key in a lock' to induce gate opening and therefore regulate proteolysis. The protein is Proteasome-associated ATPase of Beutenbergia cavernae (strain ATCC BAA-8 / DSM 12333 / CCUG 43141 / JCM 11478 / NBRC 16432 / NCIMB 13614 / HKI 0122).